Consider the following 3527-residue polypeptide: BEACH domain-containing protein A2 (3527 aa).

3 disordered regions span residues 25–46 (AGEAISDPTTPPSSSQASPSSS), 385–423 (SSPHKNRGSNDSKKQPPLSLKTRQNDDSEKQQSLSLNSR), and 454–490 (ESSGTSTSLLSQTKLTGYSRRQTPSANNRYDEPCEQG). Residues 28–46 (AISDPTTPPSSSQASPSSS) show a composition bias toward low complexity. A compositionally biased stretch (low complexity) spans 455-469 (SSGTSTSLLSQTKLT). The span at 472-481 (SRRQTPSANN) shows a compositional bias: polar residues. 5 LRR repeats span residues 1447–1470 (KLESGQTTISMSPTEIIPENNYED), 1499–1522 (FSHLSELEMGDNPVETSNCIVLSN), 1542–1565 (SIQIASLGFLENLISILWYRSHNL), 1566–1588 (AILRQINLVKHLLVTLQRGDVEV), and 2001–2024 (SSEMKSLDLTGSSSQVQPIDSRSS). Disordered stretches follow at residues 1992 to 2023 (GDHVGSVSASSEMKSLDLTGSSSQVQPIDSRS) and 2046 to 2081 (IPSPSKSSTISTPHPSHISVSEFDASSDQSSGSQGS). Over residues 1998 to 2020 (VSASSEMKSLDLTGSSSQVQPID) the composition is skewed to polar residues. 3 LRR repeats span residues 2128-2151 (TEQIKAVQALESILEMLPLYVDPE), 2221-2247 (LLSILQLANKDGRVEEVTSSGKGLLSI), and 2313-2336 (VSAVLQLLVANKNIILCPSNLDTD). The interval 2658–2680 (VNTDEKSETGSPIKSSSGKMDEI) is disordered. Residues 2666 to 2675 (TGSPIKSSSG) show a composition bias toward polar residues. In terms of domain architecture, BEACH-type PH spans 2704-2871 (EHLEKIRFRY…EREEVFRNLL (168 aa)). Residues 2896–3188 (GSRLFKLMAK…QLFQKPHVKR (293 aa)) form the BEACH domain. 4 WD repeats span residues 3272–3311 (HEGNQIQCAGVSHDGRIVVTGAEDGLVSVWRVSKDGPRGS), 3322–3361 (AHTAKVICLRVSQPYMMIASSSDDCTVIIWDLSSLSFVRQ), 3410–3451 (DLIV…DPVS), and 3483–3522 (FHKQPVTSLHLTTDLKQLLSGDSAGHLLSWTVPDEILKAS).

This Arabidopsis thaliana (Mouse-ear cress) protein is BEACH domain-containing protein A2.